A 231-amino-acid polypeptide reads, in one-letter code: L-ribulose-5-phosphate 4-epimerase (231 aa).

Substrate is bound by residues 27 to 28 (GN), 44 to 45 (SG), and 73 to 74 (SS). Residues D75, H94, and H96 each contribute to the Zn(2+) site. The active-site Proton donor/acceptor is D119. Residue H168 participates in Zn(2+) binding. The Proton donor/acceptor role is filled by Y226.

It belongs to the aldolase class II family. AraD/FucA subfamily. Zn(2+) serves as cofactor.

The catalysed reaction is L-ribulose 5-phosphate = D-xylulose 5-phosphate. It functions in the pathway carbohydrate degradation; L-arabinose degradation via L-ribulose; D-xylulose 5-phosphate from L-arabinose (bacterial route): step 3/3. Involved in the degradation of L-arabinose. Catalyzes the interconversion of L-ribulose 5-phosphate (LRu5P) and D-xylulose 5-phosphate (D-Xu5P) via a retroaldol/aldol mechanism (carbon-carbon bond cleavage analogous to a class II aldolase reaction). This Halalkalibacterium halodurans (strain ATCC BAA-125 / DSM 18197 / FERM 7344 / JCM 9153 / C-125) (Bacillus halodurans) protein is L-ribulose-5-phosphate 4-epimerase (araD).